Here is a 254-residue protein sequence, read N- to C-terminus: Ubiquinone/menaquinone biosynthesis C-methyltransferase UbiE (254 aa).

S-adenosyl-L-methionine-binding positions include T77, D98, 126-127, and S143; that span reads NA.

It belongs to the class I-like SAM-binding methyltransferase superfamily. MenG/UbiE family.

The enzyme catalyses a 2-demethylmenaquinol + S-adenosyl-L-methionine = a menaquinol + S-adenosyl-L-homocysteine + H(+). It catalyses the reaction a 2-methoxy-6-(all-trans-polyprenyl)benzene-1,4-diol + S-adenosyl-L-methionine = a 5-methoxy-2-methyl-3-(all-trans-polyprenyl)benzene-1,4-diol + S-adenosyl-L-homocysteine + H(+). The protein operates within quinol/quinone metabolism; menaquinone biosynthesis; menaquinol from 1,4-dihydroxy-2-naphthoate: step 2/2. Its pathway is cofactor biosynthesis; ubiquinone biosynthesis. Functionally, methyltransferase required for the conversion of demethylmenaquinol (DMKH2) to menaquinol (MKH2) and the conversion of 2-polyprenyl-6-methoxy-1,4-benzoquinol (DDMQH2) to 2-polyprenyl-3-methyl-6-methoxy-1,4-benzoquinol (DMQH2). This chain is Ubiquinone/menaquinone biosynthesis C-methyltransferase UbiE, found in Hydrogenovibrio crunogenus (strain DSM 25203 / XCL-2) (Thiomicrospira crunogena).